We begin with the raw amino-acid sequence, 602 residues long: Translation initiation factor IF-2 (602 aa).

Residues 112–281 enclose the tr-type G domain; the sequence is KRAPIITIMG…LLLCEVLDLK (170 aa). The segment at 121 to 128 is G1; that stretch reads GHVDHGKT. 121–128 is a binding site for GTP; that stretch reads GHVDHGKT. A G2 region spans residues 146 to 150; the sequence is GITQH. A G3 region spans residues 167–170; the sequence is DTPG. Residues 167–171 and 221–224 contribute to the GTP site; these read DTPGH and NKMD. Residues 221–224 are G4; that stretch reads NKMD. The G5 stretch occupies residues 257 to 259; it reads SAL.

This sequence belongs to the TRAFAC class translation factor GTPase superfamily. Classic translation factor GTPase family. IF-2 subfamily.

It localises to the cytoplasm. Its function is as follows. One of the essential components for the initiation of protein synthesis. Protects formylmethionyl-tRNA from spontaneous hydrolysis and promotes its binding to the 30S ribosomal subunits. Also involved in the hydrolysis of GTP during the formation of the 70S ribosomal complex. This chain is Translation initiation factor IF-2, found in Mycoplasmopsis synoviae (strain 53) (Mycoplasma synoviae).